A 115-amino-acid chain; its full sequence is MRLYINEIKIKDDILYCYTEDSIKGLSEVGQMLVDSDNYAFAYTLDDGKAYAYLIFVQETWTMLHENTTKKIIINDELELTEFHQELTYILDNIKGNNNYGKEFVATVEETFDIE.

The protein belongs to the UPF0738 family.

In Staphylococcus aureus (strain Mu50 / ATCC 700699), this protein is UPF0738 protein SAV1005.